A 313-amino-acid chain; its full sequence is HTH-type transcriptional regulator CysB (313 aa).

The 59-residue stretch at 1-59 (MNLHQFRFVREAVRQNFNLTEAAKALYTSQPGVSKAIIELEDELGVEIFTRHGKRVRSL) folds into the HTH lysR-type domain. The H-T-H motif DNA-binding region spans 19-38 (LTEAAKALYTSQPGVSKAII).

It belongs to the LysR transcriptional regulatory family.

Its function is as follows. Transcriptional regulator preferentially involved in the control of sulfate transport and reduction. Binds to DNA at target promoter regions. This Burkholderia cenocepacia (strain ATCC BAA-245 / DSM 16553 / LMG 16656 / NCTC 13227 / J2315 / CF5610) (Burkholderia cepacia (strain J2315)) protein is HTH-type transcriptional regulator CysB.